Consider the following 388-residue polypeptide: Cystathionine gamma-synthase (388 aa).

The residue at position 208 (lysine 208) is an N6-(pyridoxal phosphate)lysine.

Belongs to the trans-sulfuration enzymes family. In terms of assembly, homotetramer. Pyridoxal 5'-phosphate serves as cofactor.

Its subcellular location is the cytoplasm. The catalysed reaction is O-succinyl-L-homoserine + L-cysteine = L,L-cystathionine + succinate + H(+). Its function is as follows. Catalyzes the formation of L-cystathionine from O-succinyl-L-homoserine (OSHS) and L-cysteine, via a gamma-replacement reaction. In the absence of thiol, catalyzes gamma-elimination to form 2-oxobutanoate, succinate and ammonia. In Mycobacterium leprae (strain TN), this protein is Cystathionine gamma-synthase (metB).